The primary structure comprises 272 residues: Hydroxyacylglutathione hydrolase (272 aa).

Positions 62, 64, 66, 67, 126, 146, and 184 each coordinate Zn(2+).

It belongs to the metallo-beta-lactamase superfamily. Glyoxalase II family. Monomer. Requires Zn(2+) as cofactor.

It catalyses the reaction an S-(2-hydroxyacyl)glutathione + H2O = a 2-hydroxy carboxylate + glutathione + H(+). It functions in the pathway secondary metabolite metabolism; methylglyoxal degradation; (R)-lactate from methylglyoxal: step 2/2. Functionally, thiolesterase that catalyzes the hydrolysis of S-D-lactoyl-glutathione to form glutathione and D-lactic acid. The polypeptide is Hydroxyacylglutathione hydrolase (Saccharophagus degradans (strain 2-40 / ATCC 43961 / DSM 17024)).